The primary structure comprises 234 residues: Orotidine 5'-phosphate decarboxylase (234 aa).

Substrate-binding positions include D14, K36, D63–T72, T123, R184, Q193, G213, and R214. K65 functions as the Proton donor in the catalytic mechanism.

This sequence belongs to the OMP decarboxylase family. Type 1 subfamily. As to quaternary structure, homodimer.

The enzyme catalyses orotidine 5'-phosphate + H(+) = UMP + CO2. The protein operates within pyrimidine metabolism; UMP biosynthesis via de novo pathway; UMP from orotate: step 2/2. In terms of biological role, catalyzes the decarboxylation of orotidine 5'-monophosphate (OMP) to uridine 5'-monophosphate (UMP). The chain is Orotidine 5'-phosphate decarboxylase from Psychromonas ingrahamii (strain DSM 17664 / CCUG 51855 / 37).